The chain runs to 413 residues: Putative glutamate synthase [NADPH] small chain (413 aa).

Residues C33, C37, C43, and C47 each coordinate [4Fe-4S] cluster.

As to quaternary structure, aggregate of 4 catalytic active heterodimers, consisting of a large and a small subunit. [4Fe-4S] cluster serves as cofactor.

The catalysed reaction is 2 L-glutamate + NADP(+) = L-glutamine + 2-oxoglutarate + NADPH + H(+). It functions in the pathway amino-acid biosynthesis; L-glutamate biosynthesis via GLT pathway; L-glutamate from 2-oxoglutarate and L-glutamine (NADP(+) route): step 1/1. It participates in energy metabolism; nitrogen metabolism. This chain is Putative glutamate synthase [NADPH] small chain (gltD), found in Cereibacter sphaeroides (Rhodobacter sphaeroides).